The primary structure comprises 258 residues: Ribosomal RNA large subunit methyltransferase E (258 aa).

5 residues coordinate S-adenosyl-L-methionine: Gly-58, Trp-60, Asp-78, Asp-96, and Asp-120. The active-site Proton acceptor is Lys-160.

Belongs to the class I-like SAM-binding methyltransferase superfamily. RNA methyltransferase RlmE family.

It localises to the cytoplasm. The enzyme catalyses uridine(2552) in 23S rRNA + S-adenosyl-L-methionine = 2'-O-methyluridine(2552) in 23S rRNA + S-adenosyl-L-homocysteine + H(+). Its function is as follows. Specifically methylates the uridine in position 2552 of 23S rRNA at the 2'-O position of the ribose in the fully assembled 50S ribosomal subunit. The sequence is that of Ribosomal RNA large subunit methyltransferase E from Methanococcus maripaludis (strain C7 / ATCC BAA-1331).